We begin with the raw amino-acid sequence, 422 residues long: Ribonuclease Y (422 aa).

Residues 112–172 enclose the KH domain; the sequence is TTNIVKLPSD…IRREIATRTL (61 aa). The HD domain maps to 238–331; the sequence is VLAHSIEVAK…VAIADSISAS (94 aa).

This sequence belongs to the RNase Y family.

Functionally, endoribonuclease that initiates mRNA decay. This is Ribonuclease Y from Mycoplasma mycoides.